A 250-amino-acid chain; its full sequence is MAEQASSFTDRLAARFAGAQISVVQPRGEVTLEVAAAQWHATCLALRDELGFEQLSDLCGVDYLGYGSDEWDTADVSSQGFSRGVEGKALGRFAWGEFPSQESSNGAQPQQLPTQRFAVVAQLISYQHNQRLRVRCYAPDEQVPVVASLTDIWPGVNWFEREAFDLFGIVFDGHPDLRRILTDYGFVGHPFRKDFPLIGNVEVRYDDERKRVVYEPVTSVEPRVGVPRVIRDDARYETAAGEVGKSETAK.

The protein belongs to the complex I 30 kDa subunit family. In terms of assembly, NDH-1 is composed of 14 different subunits. Subunits NuoB, C, D, E, F, and G constitute the peripheral sector of the complex.

Its subcellular location is the cell inner membrane. The enzyme catalyses a quinone + NADH + 5 H(+)(in) = a quinol + NAD(+) + 4 H(+)(out). NDH-1 shuttles electrons from NADH, via FMN and iron-sulfur (Fe-S) centers, to quinones in the respiratory chain. The immediate electron acceptor for the enzyme in this species is believed to be ubiquinone. Couples the redox reaction to proton translocation (for every two electrons transferred, four hydrogen ions are translocated across the cytoplasmic membrane), and thus conserves the redox energy in a proton gradient. The polypeptide is NADH-quinone oxidoreductase subunit C (Xanthomonas campestris pv. campestris (strain 8004)).